A 367-amino-acid chain; its full sequence is Glutamate 5-kinase (367 aa).

Position 9 (K9) interacts with ATP. The substrate site is built by S49, D136, and N148. Residues T168 to D169 and T210 to K216 contribute to the ATP site. The region spanning S276–R350 is the PUA domain.

Belongs to the glutamate 5-kinase family.

The protein localises to the cytoplasm. The enzyme catalyses L-glutamate + ATP = L-glutamyl 5-phosphate + ADP. Its pathway is amino-acid biosynthesis; L-proline biosynthesis; L-glutamate 5-semialdehyde from L-glutamate: step 1/2. In terms of biological role, catalyzes the transfer of a phosphate group to glutamate to form L-glutamate 5-phosphate. This is Glutamate 5-kinase from Bacillus cereus (strain B4264).